The primary structure comprises 833 residues: Protein translocase subunit SecA (833 aa).

ATP contacts are provided by residues Gln87, 105–109 (GEGKT), and Asp494. Residues 789–816 (PAAVAYSGGEAEAGPAQPHREDPKVGRN) are disordered. Basic and acidic residues predominate over residues 806–815 (PHREDPKVGR). Residues Cys819, Cys821, Cys830, and Cys831 each contribute to the Zn(2+) site.

The protein belongs to the SecA family. As to quaternary structure, monomer and homodimer. Part of the essential Sec protein translocation apparatus which comprises SecA, SecYEG and auxiliary proteins SecDF-YajC and YidC. It depends on Zn(2+) as a cofactor.

The protein resides in the cell inner membrane. It localises to the cytoplasm. It carries out the reaction ATP + H2O + cellular proteinSide 1 = ADP + phosphate + cellular proteinSide 2.. Its function is as follows. Part of the Sec protein translocase complex. Interacts with the SecYEG preprotein conducting channel. Has a central role in coupling the hydrolysis of ATP to the transfer of proteins into and across the cell membrane, serving as an ATP-driven molecular motor driving the stepwise translocation of polypeptide chains across the membrane. The sequence is that of Protein translocase subunit SecA from Nitratidesulfovibrio vulgaris (strain ATCC 29579 / DSM 644 / CCUG 34227 / NCIMB 8303 / VKM B-1760 / Hildenborough) (Desulfovibrio vulgaris).